We begin with the raw amino-acid sequence, 188 residues long: Ribosome-recycling factor (188 aa).

Belongs to the RRF family.

The protein resides in the cytoplasm. Responsible for the release of ribosomes from messenger RNA at the termination of protein biosynthesis. May increase the efficiency of translation by recycling ribosomes from one round of translation to another. The protein is Ribosome-recycling factor of Anaeromyxobacter dehalogenans (strain 2CP-C).